A 219-amino-acid polypeptide reads, in one-letter code: Histone H1.4 (219 aa).

A compositionally biased stretch (low complexity) spans Met1 to Ala15. The disordered stretch occupies residues Met1–Ser41. Position 2 is an N-acetylserine (Ser2). Ser2 is modified (phosphoserine). Lys17 carries the N6-acetyllysine modification. At Thr18 the chain carries Phosphothreonine. Over residues Val20–Ala35 the composition is skewed to basic residues. Lys26 carries the N6-acetyllysine; alternate modification. Lys26 is modified (N6-methyllysine; alternate). Lys34 bears the N6-(beta-hydroxybutyryl)lysine; alternate mark. Lys34 carries the post-translational modification N6-succinyllysine; alternate. At Ser36 the chain carries Phosphoserine. The 74-residue stretch at Ser36–Lys109 folds into the H15 domain. Lys52 is subject to N6-(beta-hydroxybutyryl)lysine. Arg54 is modified (citrulline). Residues Lys64, Lys85, Lys90, and Lys106 each carry the N6-(beta-hydroxybutyryl)lysine modification. The interval Thr92–Lys219 is disordered. Over residues Lys119–Lys140 the composition is skewed to basic residues. At Thr146 the chain carries Phosphothreonine. Composition is skewed to basic residues over residues Lys149–Lys160 and Lys168–Pro185. Residue Ser150 is modified to ADP-ribosylserine. Ser187 is modified (phosphoserine). A compositionally biased stretch (basic residues) spans Lys192–Lys219.

Belongs to the histone H1/H5 family. Post-translationally, H1 histones are progressively phosphorylated during the cell cycle, becoming maximally phosphorylated during late G2 phase and M phase, and being dephosphorylated sharply thereafter. Acetylated at Lys-26. Deacetylated at Lys-26 by SIRT1. In terms of processing, citrullination at Arg-54 (H1R54ci) by PADI4 takes place within the DNA-binding site of H1 and results in its displacement from chromatin and global chromatin decondensation, thereby promoting pluripotency and stem cell maintenance. Post-translationally, ADP-ribosylated on Ser-150 in response to DNA damage.

It localises to the nucleus. The protein resides in the chromosome. In terms of biological role, histone H1 protein binds to linker DNA between nucleosomes forming the macromolecular structure known as the chromatin fiber. Histones H1 are necessary for the condensation of nucleosome chains into higher-order structured fibers. Also acts as a regulator of individual gene transcription through chromatin remodeling, nucleosome spacing and DNA methylation. The protein is Histone H1.4 of Homo sapiens (Human).